We begin with the raw amino-acid sequence, 125 residues long: PEP-dependent dihydroxyacetone kinase 2, phosphoryl donor subunit DhaM (125 aa).

The 125-residue stretch at 1 to 125 folds into the PTS EIIA type-4 domain; it reads MISIVLVSHS…AILQELTNVH (125 aa). Residue His9 is the Tele-phosphohistidine intermediate of the active site.

It belongs to the PEP-utilizing enzyme family. As to quaternary structure, homodimer. The dihydroxyacetone kinase complex is composed of a homodimer of DhaM, a homodimer of DhaK and the subunit DhaL.

It localises to the cytoplasm. It catalyses the reaction dihydroxyacetone + phosphoenolpyruvate = dihydroxyacetone phosphate + pyruvate. In terms of biological role, component of the dihydroxyacetone kinase complex, which is responsible for the phosphoenolpyruvate (PEP)-dependent phosphorylation of dihydroxyacetone. DhaM serves as the phosphoryl donor. Is phosphorylated by phosphoenolpyruvate in an EI- and HPr-dependent reaction, and a phosphorelay system on histidine residues finally leads to phosphoryl transfer to DhaL and dihydroxyacetone. This chain is PEP-dependent dihydroxyacetone kinase 2, phosphoryl donor subunit DhaM, found in Listeria innocua serovar 6a (strain ATCC BAA-680 / CLIP 11262).